A 314-amino-acid chain; its full sequence is Mitochondrial 2-oxoglutarate/malate carrier protein (314 aa).

Position 2 is an N-acetylalanine (Ala2). Position 6 is a phosphoserine (Ser6). 3 Solcar repeats span residues 23-108, 117-208, and 217-306; these read VKFL…LFER, PGFL…SKQF, and DNIL…MNKA. A helical membrane pass occupies residues 24–42; that stretch reads KFLFGGLAGMGATVFVQPL. Lys57 bears the N6-succinyllysine mark. Lys73 is subject to N6-acetyllysine. The chain crosses the membrane as a helical span at residues 83 to 101; sequence GLSAGLLRQATYTTTRLGI. Tyr102 carries the post-translational modification Phosphotyrosine. 3 consecutive transmembrane segments (helical) span residues 119 to 140, 183 to 202, and 222 to 240; these read FLLKALIGMTAGATGAFVGPPA, GCIPTMARAVVVNAAQLASY, and HFCAIMISGLVTTAASMPV. Lys256 bears the N6-acetyllysine mark. A helical transmembrane segment spans residues 281–300; sequence GFTPYYARLGPHTVLTFIFL.

It belongs to the mitochondrial carrier (TC 2.A.29) family. As to quaternary structure, interacts with SMIM26. As to expression, expressed in liver, heart and brain.

Its subcellular location is the mitochondrion inner membrane. It catalyses the reaction (S)-malate(in) + 2-oxoglutarate(out) = (S)-malate(out) + 2-oxoglutarate(in). It carries out the reaction malonate(in) + 2-oxoglutarate(out) = malonate(out) + 2-oxoglutarate(in). The enzyme catalyses succinate(in) + 2-oxoglutarate(out) = succinate(out) + 2-oxoglutarate(in). The catalysed reaction is maleate(in) + 2-oxoglutarate(out) = maleate(out) + 2-oxoglutarate(in). It catalyses the reaction oxaloacetate(in) + 2-oxoglutarate(out) = oxaloacetate(out) + 2-oxoglutarate(in). Functionally, catalyzes the transport of 2-oxoglutarate (alpha-oxoglutarate) across the inner mitochondrial membrane in an electroneutral exchange for malate. Can also exchange 2-oxoglutarate for other dicarboxylic acids such as malonate, succinate, maleate and oxaloacetate, although with lower affinity. Contributes to several metabolic processes, including the malate-aspartate shuttle, the oxoglutarate/isocitrate shuttle, in gluconeogenesis from lactate, and in nitrogen metabolism. Maintains mitochondrial fusion and fission events, and the organization and morphology of cristae. Involved in the regulation of apoptosis. Helps protect from cytotoxic-induced apoptosis by modulating glutathione levels in mitochondria. In Rattus norvegicus (Rat), this protein is Mitochondrial 2-oxoglutarate/malate carrier protein (Slc25a11).